We begin with the raw amino-acid sequence, 65 residues long: UPF0434 protein Mmwyl1_2153 (65 aa).

This sequence belongs to the UPF0434 family.

This is UPF0434 protein Mmwyl1_2153 from Marinomonas sp. (strain MWYL1).